A 145-amino-acid polypeptide reads, in one-letter code: Bacilliredoxin ABC2045 (145 aa).

The protein belongs to the bacilliredoxin family.

The polypeptide is Bacilliredoxin ABC2045 (Shouchella clausii (strain KSM-K16) (Alkalihalobacillus clausii)).